Consider the following 295-residue polypeptide: uncharacterized protein (295 aa).

Positions 1–19 (MHKLLLIITVFSTFNVAQA) are cleaved as a signal peptide.

This is an uncharacterized protein from Rickettsia typhi (strain ATCC VR-144 / Wilmington).